The following is a 565-amino-acid chain: GEEEDEEEEEEEESEEGGGEEEESEEEEEEKQENESHHQATSKEYIAVGDFTAQQAGDLTFKKREILLIIEKKPDGWWIAKNAKGNKGLIPRTYVEPYNKEEGQDTSEEEDSEEDVEVGDQTAGGEEVKQRTDSHWSAVQKAISEQINTVDVLTTMGAIPAGFRPSTLFQLLEEGNQFRASYFLQPELTPSQLAFRDLMWDAKTGTIRSRPSRVSFILTLWSCKMIPLPGTSIQVLSRHVRLCIFDGNKVLSNIHTVRATWQSKKPKTWTFSPQVTGILPCLLDGDCFIRSNSSSPDLGILFELGISYIRNSTGERGELSCGWVFLKLFDASGIPIPAKTYELFLNGGTPYEKGVEVDPSVSRRAYGSVFHQMMTMRRQPQLLVKLRSLNRRSRDLLSLLPETLIGSMCTIHLLIFYRQILGDVLLKDRTSMQSADLISNPVLATFPKLLEQPDMMDALRSSWAEKESTLKRSEKRDKEFLKAMFLLVYHDCVVPLLHSTLLPPFRWAEEETEAARWKVIADFLKQNQENGGALQALLSPDGVHEPFDISEQTYDLLGEIRKNVA.

The span at 1–32 (GEEEDEEEEEEEESEEGGGEEEESEEEEEEKQ) shows a compositional bias: acidic residues. Disordered stretches follow at residues 1 to 46 (GEEE…KEYI) and 95 to 132 (VEPY…KQRT). Residues 2-48 (EEEDEEEEEEEESEEGGGEEEESEEEEEEKQENESHHQATSKEYIAV) adopt a coiled-coil conformation. Ser14 is subject to Phosphoserine. Residues 40–100 (ATSKEYIAVG…PRTYVEPYNK (61 aa)) enclose the SH3 domain. Positions 104–118 (QDTSEEEDSEEDVEV) are enriched in acidic residues. Position 182 is a phosphotyrosine; by FAK2 (Tyr182). Residue Tyr554 is modified to Phosphotyrosine; by SRC.

The protein belongs to the nephrocystin-1 family. As to quaternary structure, interacts with Crk-associated substrate BCAR1, NPHP4, PTK2B/PYK2 and tensin. Interacts with INVS and NPHP3. Interacts with AHI1 and TNK2. Interacts with NPHP4 in a complex containing NPHP1, NPHP4 and RPGRIP1L/NPHP8. Interacts with IQCB1; the interaction likely requires additional interactors. Interacts with KIF7. Interacts with ANKS3. Interacts with SPATA7. Interacts with FLNA. In terms of tissue distribution, expressed in renal cells (at protein level).

The protein localises to the cell junction. Its subcellular location is the adherens junction. It localises to the cell projection. It is found in the cilium. The protein resides in the cytoplasm. The protein localises to the cytoskeleton. Its subcellular location is the cilium axoneme. It localises to the tight junction. In terms of biological role, together with BCAR1 it may play a role in the control of epithelial cell polarity. Involved in the organization of apical junctions in kidney cells together with NPHP4 and RPGRIP1L/NPHP8. Does not seem to be strictly required for ciliogenesis. Seems to help to recruit PTK2B/PYK2 to cell matrix adhesions, thereby initiating phosphorylation of PTK2B/PYK2 and PTK2B/PYK2-dependent signaling. May play a role in the regulation of intraflagellar transport (IFT) during cilia assembly. Required for normal retina development. In connecting photoreceptor cilia influences the movement of some IFT proteins such as IFT88 and WDR19. Involved in spermatogenesis. The sequence is that of Nephrocystin-1 (NPHP1) from Canis lupus familiaris (Dog).